The chain runs to 801 residues: Squamosa promoter-binding-like protein 7 (801 aa).

2 disordered regions span residues 1–23 and 59–91; these read MSSL…LVND and SPPL…DRVR. The SBP-type; atypical zinc-finger motif lies at 135–212; it reads VARCQVPDCE…ERHNNRRKRK (78 aa). Zn(2+) is bound by residues Cys138, Cys143, Cys160, Cys163, Cys179, Cys182, His186, and Cys198. The Bipartite nuclear localization signal motif lies at 195–211; sequence KRSCRRKLERHNNRRKR. Over residues 203-213 the composition is skewed to basic residues; sequence ERHNNRRKRKP. 2 disordered regions span residues 203 to 258 and 286 to 313; these read ERHN…PSLI and GSGE…NKSA. Positions 222–233 are enriched in polar residues; the sequence is EQQQVLSQNDNS. A compositionally biased stretch (basic and acidic residues) spans 249–258; the sequence is QRAEEEPSLI. The segment covering 304-313 has biased composition (polar residues); that stretch reads SPSNGDNKSA.

As to quaternary structure, homodimer. Interacts with KIN17. Interacts with HY5. It depends on Zn(2+) as a cofactor. In terms of tissue distribution, expressed in roots rosette leaves, cauline leaves, stems, flowers and siliques.

It localises to the nucleus speckle. In terms of biological role, transcription factor that participates in reprogramming global gene expression during copper deficiency in order to improve the metal uptake and prioritize its distribution to copper proteins of major importance. Binds directly to 5'-GTAC-3' motifs in the microRNA (miRNA) promoter of the stress-responsive miRNAs miR398b and miR398c to activate their transcription. During copper deficiency, activates the copper transporters COPT1 and COPT2, and the copper chaperone CCH, directly or indirectly via miRNAs. Required for the expression of the miRNAs miR397, miR408 and miR857. Acts coordinately with HY5 to regulate miR408 and its target genes in response to changes in light and copper conditions. Activates miR857 and its target genes in response to low copper conditions. Involved in cadmium stress response by regulating miR397a, miR398b, miR398c and miR857. Required for iron homeostasis during copper deficiency. The protein is Squamosa promoter-binding-like protein 7 (SPL7) of Arabidopsis thaliana (Mouse-ear cress).